The following is a 269-amino-acid chain: MGILSVDLLITLQILPVFFSNCLFLALYDSVILLKHVVLLLSRSKSTRGEWRRMLTSEGMRCIWKSFLLDAYKQVKLGEDAPNSSVVHVSNPEGSNNHGHGTQEKTVDGAECHLLDFANPERPLVVNFGSATUPPFTSQLPAFSKLVEEFSSVADFLLVYIDEAHPSDGWAVPGDSSLSFEVKKHQNQEDRCAAAHQLLERFSLPPQCRVVADRMDNNANVAYGVAFERVCIVQRQKIAYLGGKGPFYYNLQEVRRWLEKNFSKRUKKT.

The Lumenal portion of the chain corresponds to 1–9 (MGILSVDLL). Residues 10 to 34 (ITLQILPVFFSNCLFLALYDSVILL) form a helical; Signal-anchor for type III membrane protein membrane-spanning segment. The Cytoplasmic portion of the chain corresponds to 35–269 (KHVVLLLSRS…KNFSKRUKKT (235 aa)). Selenocysteine 133 is a catalytic residue. Residues selenocysteine 133 and selenocysteine 266 are each a non-standard amino acid (selenocysteine).

Belongs to the iodothyronine deiodinase family. Predominantly monomer. Can form homodimers but homodimerization is not essential for enzyme activity. Interacts with USP20 and USP33. Interacts with MARCHF6. Post-translationally, ubiquitinated by MARCHF6, leading to its degradation by the proteasome. Deubiquitinated by USP20 and USP33. As to expression, more expressed in pituitary than in brain, low to undetectable levels in thyroid and skeletal muscle.

The protein localises to the endoplasmic reticulum membrane. The enzyme catalyses 3,3',5-triiodo-L-thyronine + iodide + A + H(+) = L-thyroxine + AH2. The catalysed reaction is 3,3'-diiodo-L-thyronine + iodide + A + H(+) = 3,3',5'-triiodo-L-thyronine + AH2. It catalyses the reaction 3'-iodo-L-thyronine + iodide + A + H(+) = 3',5'-diiodo-L-thyronine + AH2. It carries out the reaction 3,3'-diiodothyronamine + iodide + A + H(+) = 3,3',5'-triiodothyronamine + AH2. The enzyme catalyses 3'-iodothyronamine + iodide + A + H(+) = 3',5'-diiodothyronamine + AH2. Functionally, plays a crucial role in the metabolism of thyroid hormones (TH) and has specific roles in TH activation and inactivation by deiodination.Catalyzes the deiodination of L-thyroxine (T4) to 3,5,3'-triiodothyronine (T3) and 3,3',5'-triiodothyronine (rT3) to 3,3'-diiodothyronine (3,3'-T2) via outer-ring deiodination (ORD). Catalyzes the deiodination of 3',5'-diiodothyronine (3',5'-T2) to 3'-monoiodothyronine (3'-T1) via ORD. Catalyzes the phenolic ring deiodinations of 3,3',5'-triiodothyronamine and 3',5'- diiodothyronamine. This chain is Type II iodothyronine deiodinase (DIO2), found in Sus scrofa (Pig).